We begin with the raw amino-acid sequence, 183 residues long: MRAAYLFLLFLPAGLLAQGQYDLDPLPPFPDHVQYTHYSDQIDNPDYYDYQEVTPRPSEEQFQFQSQQQVQQEVIPAPTPEPGNAELEPTEPGPLDCREEQYPCTRLYSIHRPCKQCLNEVCFYSLRRVYVINKEICVRTVCAHEELLRADLCRDKFSKCGVMASSGLCQSVAASCARSCGSC.

The segment at residues 1–17 (MRAAYLFLLFLPAGLLA) is a signal peptide (or 19). Glutamine 18 carries the pyrrolidone carboxylic acid modification. Sulfotyrosine occurs at positions 47, 48, and 50. Positions 58 to 94 (SEEQFQFQSQQQVQQEVIPAPTPEPGNAELEPTEPGP) are disordered. Low complexity predominate over residues 60–74 (EQFQFQSQQQVQQEV). In terms of domain architecture, ShKT spans 153–183 (CRDKFSKCGVMASSGLCQSVAASCARSCGSC). Cystine bridges form between cysteine 153/cysteine 183, cysteine 160/cysteine 176, and cysteine 169/cysteine 180.

This sequence belongs to the MFAP family. As to quaternary structure, forms a ternary complex with BGN and ELN. Interacts with FBN1 (via N-terminal domain) and FBN2. Post-translationally, forms intermolecular disulfide bonds either with other MAGP-1 molecules or with other components of the microfibrils. May form transglutaminase cross-links. O-glycosylated.

It localises to the secreted. It is found in the extracellular space. Its subcellular location is the extracellular matrix. Functionally, component of the elastin-associated microfibrils. The polypeptide is Microfibrillar-associated protein 2 (MFAP2) (Homo sapiens (Human)).